Here is a 486-residue protein sequence, read N- to C-terminus: Glucose-6-phosphate 1-dehydrogenase (486 aa).

Residues 13-20, Arg-47, 86-87, and Lys-149 contribute to the NADP(+) site; these read GGTGDLAK and DV. 4 residues coordinate substrate: His-179, Lys-183, Glu-217, and Asp-236. The active-site Proton acceptor is the His-241. Lys-339 and Lys-344 together coordinate substrate.

The protein belongs to the glucose-6-phosphate dehydrogenase family. In terms of assembly, homodimer.

It catalyses the reaction D-glucose 6-phosphate + NAD(+) = 6-phospho-D-glucono-1,5-lactone + NADH + H(+). It carries out the reaction D-glucose 6-phosphate + NADP(+) = 6-phospho-D-glucono-1,5-lactone + NADPH + H(+). It functions in the pathway carbohydrate degradation; pentose phosphate pathway; D-ribulose 5-phosphate from D-glucose 6-phosphate (oxidative stage): step 1/3. Functionally, catalyzes the oxidation of glucose 6-phosphate to 6-phosphogluconolactone. Can utilize either NADP(+) or NAD(+). The protein is Glucose-6-phosphate 1-dehydrogenase of Leuconostoc mesenteroides.